Reading from the N-terminus, the 149-residue chain is UPF0178 protein Psyc_0274 (149 aa).

This sequence belongs to the UPF0178 family.

The sequence is that of UPF0178 protein Psyc_0274 from Psychrobacter arcticus (strain DSM 17307 / VKM B-2377 / 273-4).